Reading from the N-terminus, the 434-residue chain is Nicotinate phosphoribosyltransferase (434 aa).

At His242 the chain carries Phosphohistidine; by autocatalysis.

This sequence belongs to the NAPRTase family. Transiently phosphorylated on a His residue during the reaction cycle. Phosphorylation strongly increases the affinity for substrates and increases the rate of nicotinate D-ribonucleotide production. Dephosphorylation regenerates the low-affinity form of the enzyme, leading to product release.

It carries out the reaction nicotinate + 5-phospho-alpha-D-ribose 1-diphosphate + ATP + H2O = nicotinate beta-D-ribonucleotide + ADP + phosphate + diphosphate. Its pathway is cofactor biosynthesis; NAD(+) biosynthesis; nicotinate D-ribonucleotide from nicotinate: step 1/1. Catalyzes the synthesis of beta-nicotinate D-ribonucleotide from nicotinate and 5-phospho-D-ribose 1-phosphate at the expense of ATP. In Bradyrhizobium sp. (strain BTAi1 / ATCC BAA-1182), this protein is Nicotinate phosphoribosyltransferase.